The sequence spans 809 residues: Sucrose synthase 3 (809 aa).

The tract at residues 277 to 755 (MVFNVVILSP…GLQRIYERYT (479 aa)) is GT-B glycosyltransferase.

This sequence belongs to the glycosyltransferase 1 family. Plant sucrose synthase subfamily. Detected in the whole plant with highest expression in developing siliques, vasculature of cotyledons and stomatal guard cells. Also detected throughout the mature parts of the root but not in the expanding zone.

It carries out the reaction an NDP-alpha-D-glucose + D-fructose = a ribonucleoside 5'-diphosphate + sucrose + H(+). Sucrose-cleaving enzyme that provides UDP-glucose and fructose for various metabolic pathways. Modulates metabolic homeostasis and direct carbon towards starch synthesis in developing seeds. The protein is Sucrose synthase 3 (SUS3) of Arabidopsis thaliana (Mouse-ear cress).